The following is a 250-amino-acid chain: Triosephosphate isomerase (250 aa).

9–11 serves as a coordination point for substrate; it reads NWK. Catalysis depends on H95, which acts as the Electrophile. E167 (proton acceptor) is an active-site residue. Substrate is bound by residues G173, S212, and 233 to 234; that span reads GG.

It belongs to the triosephosphate isomerase family. As to quaternary structure, homodimer.

It is found in the cytoplasm. The catalysed reaction is D-glyceraldehyde 3-phosphate = dihydroxyacetone phosphate. Its pathway is carbohydrate biosynthesis; gluconeogenesis. It participates in carbohydrate degradation; glycolysis; D-glyceraldehyde 3-phosphate from glycerone phosphate: step 1/1. Involved in the gluconeogenesis. Catalyzes stereospecifically the conversion of dihydroxyacetone phosphate (DHAP) to D-glyceraldehyde-3-phosphate (G3P). The protein is Triosephosphate isomerase of Endomicrobium trichonymphae.